The following is a 426-amino-acid chain: Putative phosphate permease CPn_0680/CP_0067/CPj0680/CpB0707 (426 aa).

11 consecutive transmembrane segments (helical) span residues 1 to 21 (MLPL…NIGA), 42 to 62 (AVVI…DRVA), 87 to 107 (TAAL…GWPV), 112 to 132 (SIVG…IIYW), 137 to 157 (IILI…YLIF), 180 to 200 (FLAA…GVIL), 207 to 227 (WAVS…FYYV), 260 to 280 (LVVE…MAFA), 313 to 333 (LMAF…WRVI), 364 to 384 (ILGL…GIGL), and 399 to 419 (IVLS…LFFF).

Belongs to the inorganic phosphate transporter (PiT) (TC 2.A.20) family.

The protein localises to the cell membrane. Functionally, potential transporter for phosphate. This Chlamydia pneumoniae (Chlamydophila pneumoniae) protein is Putative phosphate permease CPn_0680/CP_0067/CPj0680/CpB0707.